Here is a 538-residue protein sequence, read N- to C-terminus: Carboxypeptidase 2 (538 aa).

Positions 1-21 are cleaved as a signal peptide; it reads MVAYRFLTLISLGLGSHCASA. N-linked (GlcNAc...) asparagine glycosylation is present at asparagine 46. The segment at 53-76 is disordered; that stretch reads PAFTSPGTVPRGFSDGTSGPTRDE. In terms of domain architecture, Peptidase M14 spans 71 to 351; sequence GPTRDETMEG…VMVKSILQTA (281 aa). Residues histidine 136, glutamate 139, and histidine 224 each contribute to the Zn(2+) site. Glutamate 322 (proton donor/acceptor) is an active-site residue. 2 N-linked (GlcNAc...) asparagine glycosylation sites follow: asparagine 393 and asparagine 459.

This sequence belongs to the peptidase M14 family. Zn(2+) serves as cofactor.

It is found in the secreted. Functionally, extracellular metalloprotease that contributes to pathogenicity. The chain is Carboxypeptidase 2 (MCPB) from Trichophyton tonsurans (Scalp ringworm fungus).